A 278-amino-acid polypeptide reads, in one-letter code: 3-methyl-2-oxobutanoate hydroxymethyltransferase (278 aa).

Positions 43 and 82 each coordinate Mg(2+). Residues 43–44, D82, and K112 contribute to the 3-methyl-2-oxobutanoate site; that span reads DS. Residue E114 participates in Mg(2+) binding. The active-site Proton acceptor is the E181.

This sequence belongs to the PanB family. In terms of assembly, homodecamer; pentamer of dimers. The cofactor is Mg(2+).

The protein localises to the cytoplasm. It carries out the reaction 3-methyl-2-oxobutanoate + (6R)-5,10-methylene-5,6,7,8-tetrahydrofolate + H2O = 2-dehydropantoate + (6S)-5,6,7,8-tetrahydrofolate. It functions in the pathway cofactor biosynthesis; (R)-pantothenate biosynthesis; (R)-pantoate from 3-methyl-2-oxobutanoate: step 1/2. Catalyzes the reversible reaction in which hydroxymethyl group from 5,10-methylenetetrahydrofolate is transferred onto alpha-ketoisovalerate to form ketopantoate. The polypeptide is 3-methyl-2-oxobutanoate hydroxymethyltransferase (Bacillus cereus (strain ATCC 14579 / DSM 31 / CCUG 7414 / JCM 2152 / NBRC 15305 / NCIMB 9373 / NCTC 2599 / NRRL B-3711)).